Consider the following 148-residue polypeptide: uncharacterized protein (148 aa).

Residues 25–148 (LSIGLIFSLI…YSITNIFIYN (124 aa)) form the ABC transmembrane type-1 domain. Helical transmembrane passes span 26 to 46 (SIGL…PLII), 60 to 80 (IVII…STYI), and 127 to 147 (ITRV…IFIY).

The protein resides in the cell membrane. This is an uncharacterized protein from Staphylococcus epidermidis.